A 677-amino-acid polypeptide reads, in one-letter code: Mitochondrial disaggregase (677 aa).

The N-terminal 28 residues, 1-28, are a transit peptide targeting the mitochondrion; that stretch reads MLGSLVSKRTAPAPRLLLQLLRSPSLRS. The interval 92-126 is autoinhibitory; sequence PSPEDTLPGQDSWNGVLSRAGLGVWALATALVVHC. ANK repeat units follow at residues 133-162, 166-195, 235-265, and 268-297; these read SKDAALMEAARANNVQEVSRLLSEGADVNA, LGWTALMVAAINRNDSVVQVLLAAGADPNL, KGCTALHYAVLADDYRTVKELLDGGANPLQR, and MGHTPLDYAREGEVMKLLRTSETKYQEKQR. Positions 316, 318, 353, 354, 355, 356, 357, 358, 425, and 466 each coordinate ATP. The segment at 477-505 is regulatory; slows ATPase and disaggregase activities; the sequence is LQLRQEALEMSRNRIAENLGDVQISDKIT. Arginine 531 is an ATP binding site. An N6-acetyllysine modification is found at lysine 559. Arginine 590 provides a ligand contact to ATP.

Belongs to the ClpA/ClpB family. Homododecamer when substrate-bound; the homododecamer consists of 2 homohexamers stacked head-to-head via ANK repeat-mediated interactions. The active substrate-bound form is likely to exist in a dynamic equilibrium between homohexamers and homododecamers. Homotetradecamer in the unbound state which is remodeled upon substrate binding into the homododecamer. Interacts with PHB and PHB2. Interacts with MAVS; the interaction is enhanced by Sendai virus infection. Post-translationally, proteolytically cleaved by protease PARL. ATP-dependent protein disaggregase activity is stimulated by PARL-mediated cleavage of the N-terminal autoinhibitory peptide.

It localises to the mitochondrion intermembrane space. The catalysed reaction is ATP + H2O = ADP + phosphate + H(+). With respect to regulation, disaggregase activity is inhibited by ADP. Its function is as follows. Functions as a regulatory ATPase and participates in secretion/protein trafficking process. Has ATP-dependent protein disaggregase activity and is required to maintain the solubility of key mitochondrial proteins. Involved in mitochondrial-mediated antiviral innate immunity, activates RIG-I-mediated signal transduction and production of IFNB1 and pro-inflammatory cytokine IL6. Plays a role in granulocyte differentiation. The sequence is that of Mitochondrial disaggregase from Bos taurus (Bovine).